The following is a 382-amino-acid chain: D-galactonate dehydratase (382 aa).

Asp183 contributes to the Mg(2+) binding site. His185 (proton donor) is an active-site residue. Residues Glu209 and Glu235 each contribute to the Mg(2+) site. His285 acts as the Proton acceptor in catalysis. A disordered region spans residues 361 to 382 (NENPPDWRNPVWRHSDGSIAEW).

This sequence belongs to the mandelate racemase/muconate lactonizing enzyme family. GalD subfamily. Mg(2+) is required as a cofactor.

It carries out the reaction D-galactonate = 2-dehydro-3-deoxy-D-galactonate + H2O. It participates in carbohydrate acid metabolism; D-galactonate degradation; D-glyceraldehyde 3-phosphate and pyruvate from D-galactonate: step 1/3. Functionally, catalyzes the dehydration of D-galactonate to 2-keto-3-deoxy-D-galactonate. This Xanthomonas axonopodis pv. citri (strain 306) protein is D-galactonate dehydratase.